We begin with the raw amino-acid sequence, 426 residues long: Serine/threonine-protein kinase ssn3 (426 aa).

The Protein kinase domain occupies 41 to 368 (YHIVGFISSG…AQEALEHPYF (328 aa)). Residues 47–55 (ISSGTYGRV) and Lys-71 each bind ATP. Residue Asp-173 is the Proton acceptor of the active site. Residues 390 to 426 (RVTQDDNDIRSGSLPGTKRSGLPDDSLMGRAAKRLKE) are disordered.

This sequence belongs to the protein kinase superfamily. CMGC Ser/Thr protein kinase family. CDC2/CDKX subfamily. As to quaternary structure, component of the srb8-11 complex, a regulatory module of the Mediator complex. It depends on Mg(2+) as a cofactor.

The protein localises to the nucleus. It carries out the reaction L-seryl-[protein] + ATP = O-phospho-L-seryl-[protein] + ADP + H(+). The enzyme catalyses L-threonyl-[protein] + ATP = O-phospho-L-threonyl-[protein] + ADP + H(+). The catalysed reaction is [DNA-directed RNA polymerase] + ATP = phospho-[DNA-directed RNA polymerase] + ADP + H(+). In terms of biological role, component of the srb8-11 complex. The srb8-11 complex is a regulatory module of the Mediator complex which is itself involved in regulation of basal and activated RNA polymerase II-dependent transcription. The srb8-11 complex may be involved in the transcriptional repression of a subset of genes regulated by Mediator. It may inhibit the association of the Mediator complex with RNA polymerase II to form the holoenzyme complex. The srb8-11 complex phosphorylates the C-terminal domain (CTD) of the largest subunit of RNA polymerase II. The protein is Serine/threonine-protein kinase ssn3 (ssn3) of Aspergillus clavatus (strain ATCC 1007 / CBS 513.65 / DSM 816 / NCTC 3887 / NRRL 1 / QM 1276 / 107).